We begin with the raw amino-acid sequence, 186 residues long: Peptide deformylase (186 aa).

Fe cation-binding residues include C113 and H156. Residue E157 is part of the active site. H160 is a Fe cation binding site.

This sequence belongs to the polypeptide deformylase family. Requires Fe(2+) as cofactor.

It carries out the reaction N-terminal N-formyl-L-methionyl-[peptide] + H2O = N-terminal L-methionyl-[peptide] + formate. Removes the formyl group from the N-terminal Met of newly synthesized proteins. Requires at least a dipeptide for an efficient rate of reaction. N-terminal L-methionine is a prerequisite for activity but the enzyme has broad specificity at other positions. The sequence is that of Peptide deformylase from Lactiplantibacillus plantarum (strain ATCC BAA-793 / NCIMB 8826 / WCFS1) (Lactobacillus plantarum).